The primary structure comprises 510 residues: Scarecrow-like protein 29 (510 aa).

The tract at residues leucine 90 to glycine 142 is disordered. The segment covering glutamine 102 to phenylalanine 111 has biased composition (basic and acidic residues). The segment covering lysine 119–isoleucine 128 has biased composition (basic residues). Residues lysine 129 to glycine 142 are compositionally biased toward basic and acidic residues. A GRAS domain is found at lysine 136–lysine 510. Residues arginine 143–serine 205 form a leucine repeat I (LRI) region. The segment at leucine 224 to valine 294 is VHIID. A VHIID motif is present at residues leucine 259–aspartate 263. The leucine repeat II (LRII) stretch occupies residues asparagine 312 to glutamine 337. The interval leucine 347–lysine 435 is PFYRE. An SAW region spans residues methionine 438–lysine 510.

It belongs to the GRAS family. In terms of tissue distribution, expressed in seedlings, roots and flowers.

The protein resides in the nucleus. Functionally, probable transcription factor involved in plant development. The polypeptide is Scarecrow-like protein 29 (SCL29) (Arabidopsis thaliana (Mouse-ear cress)).